The following is a 632-amino-acid chain: Cleavage stimulation factor subunit 2 tau variant (632 aa).

An RRM domain is found at 16–94 (RSVFVGNIPY…RALRVDNAAS (79 aa)). Disordered stretches follow at residues 201–296 (IPGK…PGGA) and 365–433 (YMGP…TRPM). The span at 213 to 233 (PGGPGPSGPGGPGPGPAPGLC) shows a compositional bias: pro residues. A compositionally biased stretch (low complexity) spans 234–244 (PGPNVMLNQQN). Over residues 275–287 (APGPIPAAVPGPG) the composition is skewed to pro residues. Over residues 365-375 (YMGPPHQGPPM) the composition is skewed to low complexity. 2 stretches are compositionally biased toward basic and acidic residues: residues 377-390 (HGHDNRGPASHDMR) and 420-433 (RGGRESRGMETRPM). The stretch at 428-432 (METRP) is one 1-1; approximate repeat. The interval 428–466 (METRPMETEVLEPRGMERRMETCAMETRGMDARGLEMRG) is 8 X 5 AA tandem repeats of M-E-T-R-[AG]. One copy of the 1-2; approximate repeat lies at 433-437 (METEV). The stretch at 438–442 (LEPRG) is one 1-3; approximate repeat. One copy of the 1-4; approximate repeat lies at 443 to 446 (MERR). The 1-5; approximate repeat unit spans residues 447–451 (METCA). Residues 452 to 456 (METRG) form a 1-6 repeat. The stretch at 457–461 (MDARG) is one 1-7; approximate repeat. One copy of the 1-8; approximate repeat lies at 462–466 (LEMRG). A 2-1; approximate repeat occupies 508-512 (GGTMQ). Positions 508-565 (GGTMQGAGIQGGGMQGAGMQGGGMQGAGMQGGGMQGAGMQAGMQGASMQGGMQGAGMQ) are 12 X 5 AA tandem repeats of G-[AT]-G-[MI]-Q. The stretch at 513–517 (GAGIQ) is one 2-2 repeat. A 2-3; approximate repeat occupies 518 to 522 (GGGMQ). The span at 519–543 (GGMQGAGMQGGGMQGAGMQGGGMQG) shows a compositional bias: gly residues. Residues 519–590 (GGMQGAGMQG…GQSQVTPQDQ (72 aa)) form a disordered region. A 2-4 repeat occupies 523-527 (GAGMQ). One copy of the 2-5; approximate repeat lies at 528–532 (GGGMQ). One copy of the 2-6 repeat lies at 533-537 (GAGMQ). One copy of the 2-7; approximate repeat lies at 538–542 (GGGMQ). The 2-8 repeat unit spans residues 543–547 (GAGMQ). The span at 544 to 557 (AGMQAGMQGASMQG) shows a compositional bias: low complexity. Residues 548-551 (AGMQ) form a 2-9; approximate repeat. Residues 552 to 556 (GASMQ) form a 2-10; approximate repeat. One copy of the 2-11; approximate repeat lies at 557-560 (GGMQ). The segment covering 558–574 (GMQGAGMQGASKQGGGQ) has biased composition (gly residues). One copy of the 2-12 repeat lies at 561–565 (GAGMQ). Over residues 575-584 (PSSFSPGQSQ) the composition is skewed to low complexity. A Phosphoserine modification is found at S579.

Expressed in testes, where it is restricted to pachytene spermatocytes and spermatids, and in the brain (at protein level).

It localises to the nucleus. May play a significant role in AAUAAA-independent mRNA polyadenylation in germ cells. Directly involved in the binding to pre-mRNAs. This Mus musculus (Mouse) protein is Cleavage stimulation factor subunit 2 tau variant (Cstf2t).